A 96-amino-acid chain; its full sequence is Copper-sensing transcriptional repressor RicR (96 aa).

Thr2 is modified (N-acetylthreonine). The Cu cation site is built by Cys38, His63, and Cys67.

This sequence belongs to the CsoR family.

Its subcellular location is the cytoplasm. Under low copper conditions, represses the expression of lpqS, Rv2963, mymT, socA, socB, mmcO and its own expression. In the presence of copper, RicR dissociates from DNA, leading to the expression of the target genes. Members of the RicR regulon are important for copper resistance during infections and full virulence in a mouse model of infection. The protein is Copper-sensing transcriptional repressor RicR of Mycobacterium tuberculosis (strain ATCC 25618 / H37Rv).